The sequence spans 208 residues: MSKSYTLKAELRERVGKGSSRELRRNGFIPAVIYGDKQPPLAIAVSYKEIFYKIYAGGFRTTVATIAVGQQKIMVLPKDYQLDPVRDFPIHVDFLRVSAQSVVEVSIPVHFFNEDTAPGLKKGGVLNIVRHEIECIAPANAIPEAIEIDLSNYSIGDSIHISVVKLPKDVTPVIQDRDFTIATIAAPAGMNVSDDSSEQESDKDNAKT.

Belongs to the bacterial ribosomal protein bL25 family. CTC subfamily. In terms of assembly, part of the 50S ribosomal subunit; part of the 5S rRNA/L5/L18/L25 subcomplex. Contacts the 5S rRNA. Binds to the 5S rRNA independently of L5 and L18.

This is one of the proteins that binds to the 5S RNA in the ribosome where it forms part of the central protuberance. This is Large ribosomal subunit protein bL25 from Bartonella quintana (strain Toulouse) (Rochalimaea quintana).